The following is a 368-amino-acid chain: Isopentenyl-diphosphate delta-isomerase (368 aa).

A substrate-binding site is contributed by Arg7–Lys8. FMN is bound by residues Thr65, Gly66–Thr68, Ser96, and Asn125. Position 96–98 (Ser96–Arg98) interacts with substrate. Gln160 is a substrate binding site. Position 161 (Glu161) interacts with Mg(2+). FMN is bound by residues Lys193, Ser218, Thr223, Gly275–Arg277, and Ala296–Leu297.

Belongs to the IPP isomerase type 2 family. As to quaternary structure, homooctamer. Dimer of tetramers. It depends on FMN as a cofactor. NADPH serves as cofactor. Mg(2+) is required as a cofactor.

Its subcellular location is the cytoplasm. It carries out the reaction isopentenyl diphosphate = dimethylallyl diphosphate. In terms of biological role, involved in the biosynthesis of isoprenoids. Catalyzes the 1,3-allylic rearrangement of the homoallylic substrate isopentenyl (IPP) to its allylic isomer, dimethylallyl diphosphate (DMAPP). This chain is Isopentenyl-diphosphate delta-isomerase, found in Saccharolobus solfataricus (strain ATCC 35092 / DSM 1617 / JCM 11322 / P2) (Sulfolobus solfataricus).